The chain runs to 1551 residues: Transient receptor potential cation channel subfamily M member-like 2 (1551 aa).

The Cytoplasmic segment spans residues 1–714 (MGKDSFTPLY…WMGTMAMNTR (714 aa)). The stretch at 715-730 (WWKVLVCLYLPVLIFP) is an intramembrane region. The Cytoplasmic segment spans residues 731–837 (IIYFVPDEQH…DRIMHFYSAP (107 aa)). A disordered region spans residues 744–767 (AAEREHQKSLNQKSSKVKSHKEKN). The chain crosses the membrane as a helical span at residues 838-858 (FSKFVGNVVGYLAFIFLYAYV). The Extracellular segment spans residues 859–877 (VLFNFPRFDPAKTLGGIHP). The helical transmembrane segment at 878–898 (TEIVLYFWVFTILIEEIRQLA) threads the bilayer. Ca(2+)-binding residues include glutamate 893 and glutamine 896. The Cytoplasmic segment spans residues 899–916 (AKPPKYIKDKVSVYFSDT). A helical membrane pass occupies residues 917–937 (WNFVDIFSLTVFIIAIILRFF). Positions 918 and 921 each coordinate Ca(2+). Residues 938 to 947 (TNSRIFTASR) are Extracellular-facing. The helical transmembrane segment at 948–968 (IILSLDIIFFIVRSLQIFSVN) threads the bilayer. The Cytoplasmic portion of the chain corresponds to 969–980 (RLLGPKLVMIQK). The chain crosses the membrane as a helical span at residues 981-1001 (MMQDLAQFIIILAVFTIAYGI). The Extracellular portion of the chain corresponds to 1002 to 1018 (ALHAVMFPSPGIYARNN). Asparagine 1017 carries N-linked (GlcNAc...) asparagine glycosylation. The pore-forming intramembrane region spans 1019-1034 (TWVTITSVVQYPYWQM). Positions 1035 to 1037 (YGE) match the Selectivity filter motif. At 1035–1059 (YGELFLDEIQGEKPKEFGEVDPDGR) the chain is on the extracellular side. A Prevents fast channel inactivation motif is present at residues 1040–1042 (LDE). Residues 1060 to 1080 (WLSPLLLAIYMVFTNILLLNL) form a helical membrane-spanning segment. Topologically, residues 1081–1116 (LIAIFNYTFERVQEDSDKVWKFQRYDLVQEYHSRPV) are cytoplasmic. Residues 1117–1135 (FAPPLVLLGHILIFIRWVW) lie within the membrane without spanning it. Over 1136–1551 (RMCRCGHPPR…KVAKMRDAAF (416 aa)) the chain is Cytoplasmic. Positions 1184–1209 (LEERVRALGDRVDCINSQLNRVLDSM) form a coiled coil. In terms of domain architecture, Nudix hydrolase spans 1394-1546 (WKRTSAGVML…VSILEKVAKM (153 aa)). The short motif at 1428–1449 (GMVEPGQLVTQALKAEFGEEAM) is the Nudix box element.

This sequence belongs to the transient receptor (TC 1.A.4) family. LTrpC subfamily. TRPM2 sub-subfamily. Homotetramer.

It is found in the cell membrane. With respect to regulation, activated by phosphatidylinositol 4,5-bisphosphate (PIP2). Although PIP2 is essential for the channel activation, its contribution to the level of channel activity is minimal. Also activated by diphosphate ribose-2'-phosphate. Upon binding to ADPR, channel activation requires only a short initial cytosolic Ca(2+) increase, then the activation is sustained by the uptake of extracellular Ca(2+). Activated by 2-aminoethyl diphenylborinate (2-APB) in a Ca(2+)-dependent manner. 2-APB prevents the inactivation of the channel. Functionally, nonselective, voltage-independent cation channel that mediates Ca(2+) and to a lesser extent Na(+) influx, leading to increased cytoplasmic Ca(2+) levels. Functions as a ligand-gated ion channel. Binding of ADP-ribose causes a conformation change; the channel is primed but still requires Ca(2+) binding to trigger channel opening. May have ADP-ribose pyrophosphatase activity which reduces ADP-ribose levels induced by oxidative stress, thus preventing the channel activation by reactive oxygen species. The sequence is that of Transient receptor potential cation channel subfamily M member-like 2 from Nematostella vectensis (Starlet sea anemone).